The following is a 471-amino-acid chain: Ribosomal protein uS12 methylthiotransferase RimO (471 aa).

The MTTase N-terminal domain occupies 19–134; that stretch reads PRVGFVSLGC…VMNAVHTHLP (116 aa). Residues cysteine 28, cysteine 64, cysteine 93, cysteine 169, cysteine 173, and cysteine 176 each coordinate [4Fe-4S] cluster. Residues 155–396 enclose the Radical SAM core domain; sequence LTPRHYAYLK…MAVAEEVSTA (242 aa). The 73-residue stretch at 399 to 471 folds into the TRAM domain; it reads QKRVGQTMQV…QGHDLVGQPV (73 aa).

This sequence belongs to the methylthiotransferase family. RimO subfamily. [4Fe-4S] cluster serves as cofactor.

It localises to the cytoplasm. It carries out the reaction L-aspartate(89)-[ribosomal protein uS12]-hydrogen + (sulfur carrier)-SH + AH2 + 2 S-adenosyl-L-methionine = 3-methylsulfanyl-L-aspartate(89)-[ribosomal protein uS12]-hydrogen + (sulfur carrier)-H + 5'-deoxyadenosine + L-methionine + A + S-adenosyl-L-homocysteine + 2 H(+). Functionally, catalyzes the methylthiolation of an aspartic acid residue of ribosomal protein uS12. This chain is Ribosomal protein uS12 methylthiotransferase RimO, found in Delftia acidovorans (strain DSM 14801 / SPH-1).